We begin with the raw amino-acid sequence, 263 residues long: UPF0758 protein Pden_2304 (263 aa).

Residues Val-141 to Leu-263 enclose the MPN domain. Zn(2+) is bound by residues His-212, His-214, and Asp-225. A JAMM motif motif is present at residues His-212–Asp-225.

Belongs to the UPF0758 family.

The protein is UPF0758 protein Pden_2304 of Paracoccus denitrificans (strain Pd 1222).